The following is a 796-amino-acid chain: Peroxisome proliferator-activated receptor gamma coactivator 1-alpha (796 aa).

N6-acetyllysine is present on Lys77. Residues 98–138 (PVDEDGLPSFDALTDGDVTTDNEASPSSMPDGTPPPQEAEE) form a disordered region. The span at 114 to 127 (DVTTDNEASPSSMP) shows a compositional bias: polar residues. The short motif at 142 to 146 (LKKLL) is the LXXLL motif element. An N6-acetyllysine modification is found at Lys144. Phosphothreonine; by AMPK is present on Thr176. N6-acetyllysine is present on Lys182. The interval 211–275 (YLTTNDDPPH…NDPKGSPFEN (65 aa)) is disordered. Residues 217–235 (DPPHTKPTENRNSSRDKCA) are compositionally biased toward basic and acidic residues. Positions 242–258 (TQPQSQHAQAKPTTLSL) are enriched in polar residues. Residues Lys252, Lys269, Lys276, Lys319, Lys345, Lys411, Lys440, and Lys449 each carry the N6-acetyllysine modification. A disordered region spans residues 288–350 (GTAGLTPPTT…HSTKKGPEQS (63 aa)). Positions 291–337 (GLTPPTTPPHKANQDNPFKASPKLKPSCKTVVPPPTKRARYSECSGT) are interaction with PPARG. The mediates interaction with RNF34 stretch occupies residues 348–796 (EQSELYAQLS…LKEAQRSLRR (449 aa)). Ser537 bears the Phosphoserine; by AMPK mark. Disordered regions lie at residues 541 to 597 (FNSP…SSRS) and 611 to 669 (HRNS…QKQK). A compositionally biased stretch (basic residues) spans 561–576 (QRMRSRSRSFSRHRSC). Low complexity predominate over residues 577–597 (SRSPYSRSRSRSPGSRSSSRS). The span at 620 to 629 (SRSRSPYSRR) shows a compositional bias: basic residues. The span at 630 to 669 (PRYDSYEANEHERLKRDEYRREYEKRESERAKQRERQKQK) shows a compositional bias: basic and acidic residues. An RRM domain is found at 675-751 (RVIYVGKIRP…TDFELYFCGR (77 aa)). 2 positions are modified to N6-acetyllysine: Lys756 and Lys777.

As to quaternary structure, homooligomer. Interacts with MYBBP1A; inhibits MYBBP1A transcriptional activation. Interacts with PRDM16, LPIN1 and PML. Interacts (via LXXLL motif) with RORA and RORC (via AF-2 motif); activates RORA and RORC transcriptional activation. Interacts with LRPPRC. Interacts with FOXO1. Interacts with NR5A2. Phosphorylation by AMPK in skeletal muscle increases activation of its own promoter. Phosphorylated by CLK2. In terms of processing, heavily acetylated by KAT2A/GCN5 under conditions of high nutrients, leading to inactivation of PPARGC1A. Deacetylated by SIRT1 in low nutrients/high NAD conditions, leading to its activation. Post-translationally, ubiquitinated. Ubiquitination by RNF34 induces proteasomal degradation.

The protein resides in the nucleus. The protein localises to the PML body. Transcriptional coactivator for steroid receptors and nuclear receptors. Greatly increases the transcriptional activity of PPARG and thyroid hormone receptor on the uncoupling protein promoter. Can regulate key mitochondrial genes that contribute to the program of adaptive thermogenesis. Plays an essential role in metabolic reprogramming in response to dietary availability through coordination of the expression of a wide array of genes involved in glucose and fatty acid metabolism. Acts as a key regulator of gluconeogenesis: stimulates hepatic gluconeogenesis by increasing the expression of gluconeogenic enzymes, and acting together with FOXO1 to promote the fasting gluconeogenic program. Induces the expression of PERM1 in the skeletal muscle in an ESRRA-dependent manner. Also involved in the integration of the circadian rhythms and energy metabolism. Required for oscillatory expression of clock genes, such as BMAL1 and NR1D1, through the coactivation of RORA and RORC, and metabolic genes, such as PDK4 and PEPCK. The protein is Peroxisome proliferator-activated receptor gamma coactivator 1-alpha (Ppargc1a) of Rattus norvegicus (Rat).